Here is a 443-residue protein sequence, read N- to C-terminus: Probable D-serine dehydratase (443 aa).

Residue Lys-118 is modified to N6-(pyridoxal phosphate)lysine.

Belongs to the serine/threonine dehydratase family. DsdA subfamily. It depends on pyridoxal 5'-phosphate as a cofactor.

The catalysed reaction is D-serine = pyruvate + NH4(+). The sequence is that of Probable D-serine dehydratase from Vibrio parahaemolyticus serotype O3:K6 (strain RIMD 2210633).